We begin with the raw amino-acid sequence, 185 residues long: Elongation factor P (185 aa).

It belongs to the elongation factor P family.

It is found in the cytoplasm. It functions in the pathway protein biosynthesis; polypeptide chain elongation. In terms of biological role, involved in peptide bond synthesis. Stimulates efficient translation and peptide-bond synthesis on native or reconstituted 70S ribosomes in vitro. Probably functions indirectly by altering the affinity of the ribosome for aminoacyl-tRNA, thus increasing their reactivity as acceptors for peptidyl transferase. The polypeptide is Elongation factor P (Oceanobacillus iheyensis (strain DSM 14371 / CIP 107618 / JCM 11309 / KCTC 3954 / HTE831)).